Here is a 5381-residue protein sequence, read N- to C-terminus: Protein purity of essence (5381 aa).

6 disordered regions span residues 140 to 174, 339 to 364, 599 to 621, 683 to 709, 1162 to 1212, and 1632 to 1659; these read KHPE…PKLE, QQQT…TSKD, SPET…QKSA, RNDS…SSGS, SGGD…STET, and QAAQ…QSER. The span at 339-350 shows a compositional bias: low complexity; it reads QQQTAAAASTSQ. Low complexity-rich tracts occupy residues 690 to 709 and 1167 to 1176; these read SPPS…SSGS and SSCTSAASSS. The span at 1632-1646 shows a compositional bias: polar residues; sequence QAAQPNPSEESSQAC. Residues 1647-1658 show a composition bias toward basic and acidic residues; sequence DHSEGGEQRQSE. The UBR-type zinc finger occupies 1815–1884; it reads KLCTFSQTQK…EDGSCQALSR (70 aa). Disordered regions lie at residues 1917 to 1939, 2443 to 2479, 2632 to 2652, 3037 to 3143, 3537 to 3562, and 4247 to 4280; these read KRSN…KDSI, KNTT…KQLT, PDDS…TATQ, VSAG…DNNE, KQQQ…DREK, and HHQQ…KEAA. Polar residues-rich tracts occupy residues 1920-1930, 2470-2479, 2643-2652, and 3048-3058; these read NTAPGATQQQH, SSQQHQKQLT, SGPTPVTATQ, and NVATDGSTLRT. Positions 3065-3075 are enriched in gly residues; it reads GSGGSESGGSG. The segment covering 3084-3104 has biased composition (polar residues); sequence ARSSNFGDHPNTTPPRQSCSS. The segment covering 3119–3132 has biased composition (gly residues); it reads SGSGGSASVPGGGL. The tract at residues 4904–5374 is UBR4 E3 catalytic module; that stretch reads PSLKYILRFL…SFIEDLLASL (471 aa). Residues 5022-5136 form a HemiRING-type zinc finger; it reads GLTCFICREG…SSYMQESTQR (115 aa). Residues cysteine 5025, cysteine 5028, histidine 5074, and cysteine 5077 each coordinate Zn(2+). In terms of domain architecture, UZI spans 5139–5374; it reads ISYTSSIHDL…SFIEDLLASL (236 aa).

It belongs to the UBR4 family.

Its function is as follows. Has a role in growth of the perineurial glial layer of the larval peripheral nerve. May have a role in male fertility and eye development or function. May bind calmodulin. The chain is Protein purity of essence from Drosophila pseudoobscura pseudoobscura (Fruit fly).